The sequence spans 454 residues: uncharacterized protein (454 aa).

Gly125–Thr132 is an ATP binding site.

Belongs to the AFG1 ATPase family.

This is an uncharacterized protein from Schizosaccharomyces pombe (strain 972 / ATCC 24843) (Fission yeast).